Here is a 249-residue protein sequence, read N- to C-terminus: Low affinity immunoglobulin gamma Fc region receptor III-A (249 aa).

Positions 1–16 are cleaved as a signal peptide; sequence MWQLLPSTALLLVASA. Residues 17–198 lie on the Extracellular side of the membrane; it reads RPQAADLPKA…IQGPPVPSTS (182 aa). 2 consecutive Ig-like C2-type domains span residues 24–104 and 119–172; these read PKAV…LEVH and EGEP…YFCR. 2 disulfide bridges follow: Cys-47–Cys-88 and Cys-127–Cys-171. Residues Asn-55, Asn-63, Asn-166, and Asn-179 are each glycosylated (N-linked (GlcNAc...) asparagine). A helical transmembrane segment spans residues 199-219; that stretch reads ALLPFWPHIPFAVVMALLFAV. The Cytoplasmic segment spans residues 220–249; the sequence is DTGLYFAMQRHLHNSKRAWENSKVSWKQDP.

In terms of assembly, forms a heterooligomeric complex with ITAM-containing signaling subunits FCER1G. Interacts (via transmembrane domain) with signaling subunits; this interaction is a prerequisite for receptor complex expression on the cell surface and intracellular signal transduction. Binds the Fc region of antigen-complexed IgG.

The protein localises to the cell membrane. Receptor for the invariable Fc fragment of immunoglobulin gamma (IgG). Optimally activated upon binding of clustered antigen-IgG complexes displayed on cell surfaces, triggers lysis of antibody-coated cells, a process known as antibody-dependent cellular cytotoxicity (ADCC). Does not bind free monomeric IgG, thus avoiding inappropriate effector cell activation in the absence of antigenic trigger. Mediates IgG effector functions on natural killer (NK) cells. Binds antigen-IgG complexes generated upon infection and triggers NK cell-dependent cytokine production and degranulation to limit viral load and propagation. Fc-binding subunit that associates with FCER1G adapter to form functional signaling complexes. Following the engagement of antigen-IgG complexes, triggers phosphorylation of immunoreceptor tyrosine-based activation motif (ITAM)-containing adapter with subsequent activation of phosphatidylinositol 3-kinase signaling and sustained elevation of intracellular calcium that ultimately drive NK cell activation. Mediates enhanced ADCC in response to afucosylated IgGs. The sequence is that of Low affinity immunoglobulin gamma Fc region receptor III-A from Mustela putorius furo (European domestic ferret).